Reading from the N-terminus, the 176-residue chain is Large ribosomal subunit protein uL16 (176 aa).

Belongs to the universal ribosomal protein uL16 family.

The polypeptide is Large ribosomal subunit protein uL16 (Halorubrum lacusprofundi (strain ATCC 49239 / DSM 5036 / JCM 8891 / ACAM 34)).